The chain runs to 331 residues: Protein-methionine-sulfoxide reductase catalytic subunit MsrP (331 aa).

The tat-type signal signal peptide spans methionine 1–alanine 54. Residues asparagine 86, tyrosine 89–glutamate 90, cysteine 144, serine 179, asparagine 227, arginine 232, and serine 243–lysine 245 contribute to the Mo-molybdopterin site.

This sequence belongs to the MsrP family. In terms of assembly, heterodimer of a catalytic subunit (MsrP) and a heme-binding subunit (MsrQ). It depends on Mo-molybdopterin as a cofactor. Predicted to be exported by the Tat system. The position of the signal peptide cleavage has not been experimentally proven.

The protein localises to the periplasm. The enzyme catalyses L-methionyl-[protein] + a quinone + H2O = L-methionyl-(S)-S-oxide-[protein] + a quinol. The catalysed reaction is L-methionyl-[protein] + a quinone + H2O = L-methionyl-(R)-S-oxide-[protein] + a quinol. Part of the MsrPQ system that repairs oxidized periplasmic proteins containing methionine sulfoxide residues (Met-O), using respiratory chain electrons. Thus protects these proteins from oxidative-stress damage caused by reactive species of oxygen and chlorine generated by the host defense mechanisms. MsrPQ is essential for the maintenance of envelope integrity under bleach stress, rescuing a wide series of structurally unrelated periplasmic proteins from methionine oxidation. The catalytic subunit MsrP is non-stereospecific, being able to reduce both (R-) and (S-) diastereoisomers of methionine sulfoxide. This Ralstonia nicotianae (strain ATCC BAA-1114 / GMI1000) (Ralstonia solanacearum) protein is Protein-methionine-sulfoxide reductase catalytic subunit MsrP.